We begin with the raw amino-acid sequence, 504 residues long: MSALIFLCAILIGFVIYSLISSARRPKNFPPGPRFVPWLGNTLQFRKEASAVGGQHILFERWAKDFRSDLVGLKLGREYVVVALGHEMVKEVQLQEVFEGRPDNFFLRLRTMGTRKGITCTDGQLWYEHRHFAMKQMRNVGYGRSQMEHHIELEAEELLGQLERTEEQPIEPVTWLAQSVLNVLWCLIAGKRIARQEDGTLRRLLDLMNRRSKLFDICGGLLAQFPWLRHVAPDRTGYNLIQQLNTELYGFFMDTIEEHRRQLAKDPSPAESDLIYAYLQEMKDRSAGGESSTFNETQLVMTILDFFIAGSQTTSNTINLALMVLAMRPDVQEKLFSQVTASVAAASTDAFPHLSRREAFDYMDAFIMEVQRFFHITPITGPRRALWATKLGGYDIPKNATILISLRSVHLDKEHWKDPLEFRPERFIDSAGKCFKDEYFMPFGMGRRRCLGDALARACIFSFLVRIVQHFSVVLPAGESPSMVLLPGITLTPKPYKVQFVKRT.

Cysteine 450 contacts heme.

This sequence belongs to the cytochrome P450 family. Heme serves as cofactor.

The protein resides in the endoplasmic reticulum membrane. It is found in the microsome membrane. In terms of biological role, may be involved in the metabolism of insect hormones and in the breakdown of synthetic insecticides. This Drosophila melanogaster (Fruit fly) protein is Probable cytochrome P450 305a1 (Cyp305a1).